A 167-amino-acid polypeptide reads, in one-letter code: MRCGPLYRFLWLWPYLSYVEAVPIRKVQDDTKTLIKTIVTRINDISHTQSVSSKQRVTGLDFIPGLHPLLSLSKMDQTLAIYQQILASLPSRNVIQISNDLENLRDLLHLLAASKSCPLPQVRALESLESLGVVLEASLYSTEVVALSRLQGSLQDMLRQLDLSPGC.

Positions 1 to 21 are cleaved as a signal peptide; it reads MRCGPLYRFLWLWPYLSYVEA. Residues Cys117 and Cys167 are joined by a disulfide bond.

This sequence belongs to the leptin family.

The protein resides in the secreted. Key player in the regulation of energy balance and body weight control. Once released into the circulation, has central and peripheral effects by binding LEPR, found in many tissues, which results in the activation of several major signaling pathways. In the hypothalamus, acts as an appetite-regulating factor that induces a decrease in food intake and an increase in energy consumption by inducing anorexinogenic factors and suppressing orexigenic neuropeptides, also regulates bone mass and secretion of hypothalamo-pituitary-adrenal hormones. In the periphery, increases basal metabolism, influences reproductive function, regulates pancreatic beta-cell function and insulin secretion, is pro-angiogenic for endothelial cell and affects innate and adaptive immunity. In the arcuate nucleus of the hypothalamus, activates by depolarization POMC neurons inducing FOS and SOCS3 expression to release anorexigenic peptides and inhibits by hyperpolarization NPY neurons inducing SOCS3 with a consequent reduction on release of orexigenic peptides. In addition to its known satiety inducing effect, has a modulatory role in nutrient absorption. In the intestine, reduces glucose absorption by enterocytes by activating PKC and leading to a sequential activation of p38, PI3K and ERK signaling pathways which exerts an inhibitory effect on glucose absorption. Acts as a growth factor on certain tissues, through the activation of different signaling pathways increases expression of genes involved in cell cycle regulation such as CCND1, via JAK2-STAT3 pathway, or VEGFA, via MAPK1/3 and PI3K-AKT1 pathways. May also play an apoptotic role via JAK2-STAT3 pathway and up-regulation of BIRC5 expression. Pro-angiogenic, has mitogenic activity on vascular endothelial cells and plays a role in matrix remodeling by regulating the expression of matrix metalloproteinases (MMPs) and tissue inhibitors of metalloproteinases (TIMPs). In innate immunity, modulates the activity and function of neutrophils by increasing chemotaxis and the secretion of oxygen radicals. Increases phagocytosis by macrophages and enhances secretion of pro-inflammatory mediators. Increases cytotoxic ability of NK cells. Plays a pro-inflammatory role, in synergy with IL1B, by inducing NOS2 which promotes the production of IL6, IL8 and Prostaglandin E2, through a signaling pathway that involves JAK2, PI3K, MAP2K1/MEK1 and MAPK14/p38. In adaptive immunity, promotes the switch of memory T-cells towards T helper-1 cell immune responses. Increases CD4(+)CD25(-) T-cell proliferation and reduces autophagy during TCR (T-cell receptor) stimulation, through MTOR signaling pathway activation and BCL2 up-regulation. This chain is Leptin (LEP), found in Capra hircus (Goat).